Reading from the N-terminus, the 305-residue chain is tRNA dimethylallyltransferase (305 aa).

An ATP-binding site is contributed by 14-21 (GPTASGKS). 16-21 (TASGKS) is a binding site for substrate. Residues 39 to 42 (DSMQ) form an interaction with substrate tRNA region.

This sequence belongs to the IPP transferase family. As to quaternary structure, monomer. The cofactor is Mg(2+).

It catalyses the reaction adenosine(37) in tRNA + dimethylallyl diphosphate = N(6)-dimethylallyladenosine(37) in tRNA + diphosphate. Functionally, catalyzes the transfer of a dimethylallyl group onto the adenine at position 37 in tRNAs that read codons beginning with uridine, leading to the formation of N6-(dimethylallyl)adenosine (i(6)A). In Bradyrhizobium sp. (strain BTAi1 / ATCC BAA-1182), this protein is tRNA dimethylallyltransferase.